The following is a 142-amino-acid chain: Hemoglobin subunit alpha (142 aa).

The region spanning 2–142 is the Globin domain; the sequence is VLSSADKNNV…VSTVLTSKYR (141 aa). Residue S4 is modified to Phosphoserine. An N6-succinyllysine mark is found at K8 and K12. K17 carries the post-translational modification N6-acetyllysine; alternate. K17 is subject to N6-succinyllysine; alternate. Residue Y25 is modified to Phosphotyrosine. The residue at position 36 (S36) is a Phosphoserine. K41 carries the post-translational modification N6-succinyllysine. S50 is subject to Phosphoserine. Position 59 (H59) interacts with O2. Position 88 (H88) interacts with heme b. A Phosphoserine modification is found at S103. Residue T109 is modified to Phosphothreonine. S125 is modified (phosphoserine). T135 and T138 each carry phosphothreonine. A Phosphoserine modification is found at S139.

It belongs to the globin family. Heterotetramer of two alpha chains and two beta chains. As to expression, red blood cells.

Its function is as follows. Involved in oxygen transport from the lung to the various peripheral tissues. Functionally, hemopressin acts as an antagonist peptide of the cannabinoid receptor CNR1. Hemopressin-binding efficiently blocks cannabinoid receptor CNR1 and subsequent signaling. The polypeptide is Hemoglobin subunit alpha (HBA) (Panthera onca (Jaguar)).